The chain runs to 1487 residues: Chromosome partition protein MukB (1487 aa).

An ATP-binding site is contributed by 34–41 (GGNGAGKS). Coiled coils occupy residues 297–426 (SSRE…LEKA), 460–666 (ALKH…RLAS), 781–806 (RAAR…AKAA), 836–1111 (EQAL…RTFV), and 1210–1266 (VEAI…LSNI). A flexible hinge region spans residues 667–784 (PGGSNDPRLK…VIPLFGRAAR (118 aa)).

The protein belongs to the SMC family. MukB subfamily. Homodimerization via its hinge domain. Binds to DNA via its C-terminal region. Interacts, and probably forms a ternary complex, with MukE and MukF via its C-terminal region. The complex formation is stimulated by calcium or magnesium. Interacts with tubulin-related protein FtsZ.

The protein localises to the cytoplasm. Its subcellular location is the nucleoid. Functionally, plays a central role in chromosome condensation, segregation and cell cycle progression. Functions as a homodimer, which is essential for chromosome partition. Involved in negative DNA supercoiling in vivo, and by this means organize and compact chromosomes. May achieve or facilitate chromosome segregation by condensation DNA from both sides of a centrally located replisome during cell division. This Vibrio vulnificus (strain YJ016) protein is Chromosome partition protein MukB.